The chain runs to 170 residues: Peptide deformylase (170 aa).

2 residues coordinate Fe cation: cysteine 91 and histidine 133. Residue glutamate 134 is part of the active site. Histidine 137 contributes to the Fe cation binding site.

This sequence belongs to the polypeptide deformylase family. Fe(2+) serves as cofactor.

The enzyme catalyses N-terminal N-formyl-L-methionyl-[peptide] + H2O = N-terminal L-methionyl-[peptide] + formate. Its function is as follows. Removes the formyl group from the N-terminal Met of newly synthesized proteins. Requires at least a dipeptide for an efficient rate of reaction. N-terminal L-methionine is a prerequisite for activity but the enzyme has broad specificity at other positions. This Yersinia enterocolitica serotype O:8 / biotype 1B (strain NCTC 13174 / 8081) protein is Peptide deformylase.